The primary structure comprises 444 residues: Chitinase-like protein Idgf5 (444 aa).

A signal peptide spans 1–26 (MMWIQKNPFLGLLLCSFLAFFQSTYA). Residues 29–444 (GKLVCFYDAQ…PILRSIKFKL (416 aa)) form the GH18 domain. The cysteines at positions 33 and 60 are disulfide-linked. N-linked (GlcNAc...) asparagine glycans are attached at residues Asn-289 and Asn-311. Residues Cys-349 and Cys-429 are joined by a disulfide bond.

Belongs to the glycosyl hydrolase 18 family. IDGF subfamily. Post-translationally, glycosylated.

The protein localises to the secreted. Probably required to stimulate the proliferation, polarization and motility of imaginal disk cells. May act by stabilizing the binding of insulin-like peptides to its receptor through a simultaneous interaction with both molecules to form a multiprotein signaling complex. The polypeptide is Chitinase-like protein Idgf5 (Idgf5) (Drosophila melanogaster (Fruit fly)).